The primary structure comprises 346 residues: MEFSAKQIAAFIQGEIIGDENATVHTFAKIEEGIPGAISFLSNPKYTPYIYETKASIVLVNKDFTPEQEVKATLIKVDNAYESLAKLLNLYEMSKPKRTGIDERAYVAETAKIGKDVYIAPFACIGDHAEVGDNTVIHPHATVGGGAKIGSNCILYANSTVYHDCRVGNNCILHAGCVIGADGFGFAPTPQGYEKIPQIGIVILEDNVEVGANTCIDRATMGATVIHSGVKLDNLVQIAHNDEIGSHTVMAAQVGIAGSTKVGEWCMFGGQVGIAGHLKIGNQVNLGAQSGVPGNIKSGSQLIGTPPMELKQFFKASIVQKSLPEMQIELRNLRKEIEELKQQLNK.

H240 functions as the Proton acceptor in the catalytic mechanism.

Belongs to the transferase hexapeptide repeat family. LpxD subfamily. As to quaternary structure, homotrimer.

It catalyses the reaction a UDP-3-O-[(3R)-3-hydroxyacyl]-alpha-D-glucosamine + a (3R)-hydroxyacyl-[ACP] = a UDP-2-N,3-O-bis[(3R)-3-hydroxyacyl]-alpha-D-glucosamine + holo-[ACP] + H(+). Its pathway is bacterial outer membrane biogenesis; LPS lipid A biosynthesis. Its function is as follows. Catalyzes the N-acylation of UDP-3-O-acylglucosamine using 3-hydroxyacyl-ACP as the acyl donor. Is involved in the biosynthesis of lipid A, a phosphorylated glycolipid that anchors the lipopolysaccharide to the outer membrane of the cell. The polypeptide is UDP-3-O-acylglucosamine N-acyltransferase (Bacteroides fragilis (strain ATCC 25285 / DSM 2151 / CCUG 4856 / JCM 11019 / LMG 10263 / NCTC 9343 / Onslow / VPI 2553 / EN-2)).